Reading from the N-terminus, the 390-residue chain is NADH-quinone oxidoreductase subunit D (390 aa).

It belongs to the complex I 49 kDa subunit family. NDH-1 is composed of 14 different subunits. Subunits NuoB, C, D, E, F, and G constitute the peripheral sector of the complex.

The protein resides in the cell membrane. The catalysed reaction is a quinone + NADH + 5 H(+)(in) = a quinol + NAD(+) + 4 H(+)(out). In terms of biological role, NDH-1 shuttles electrons from NADH, via FMN and iron-sulfur (Fe-S) centers, to quinones in the respiratory chain. The immediate electron acceptor for the enzyme in this species is believed to be ubiquinone. Couples the redox reaction to proton translocation (for every two electrons transferred, four hydrogen ions are translocated across the cytoplasmic membrane), and thus conserves the redox energy in a proton gradient. The protein is NADH-quinone oxidoreductase subunit D of Wolbachia pipientis wMel.